Consider the following 914-residue polypeptide: Penicillin-binding protein 1A/1B (914 aa).

Positions 1–29 (MSDQFNSREARRKANSKSSPSPKKGKKRK) are disordered. The Cytoplasmic portion of the chain corresponds to 1–37 (MSDQFNSREARRKANSKSSPSPKKGKKRKKGGLFKKT). The helical; Signal-anchor for type II membrane protein transmembrane segment at 38–58 (LFTLLILFVLGVVGGAVTFAV) threads the bilayer. The Extracellular segment spans residues 59 to 914 (MVSDAPSLDE…TNSSSIEKTN (856 aa)). The tract at residues 77–246 (STIYDKNGKE…TAYNPVKNPD (170 aa)) is transglycosylase. Residue glutamate 115 is the Proton donor; for transglycosylase activity of the active site. The interval 329–662 (TKAQDKLDEL…PDSVVEATVE (334 aa)) is transpeptidase. Serine 390 serves as the catalytic Acyl-ester intermediate; for transpeptidase activity. Residues 708–795 (KLSGLNVKYD…SYEVPKAEDD (88 aa)) form the Fibronectin type-III domain. A disordered region spans residues 773–914 (TAVSDDGKST…TNSSSIEKTN (142 aa)). Residues 798–828 (KKDQQQTDDEKQDDEKTQDDTQTDDSQKDDG) show a composition bias toward basic and acidic residues. The span at 829–840 (QTDQDQTDDSTN) shows a compositional bias: acidic residues. 2 stretches are compositionally biased toward low complexity: residues 848 to 892 (NTNT…GSDT) and 900 to 914 (SNKTQTNSSSIEKTN).

This sequence in the N-terminal section; belongs to the glycosyltransferase 51 family. The protein in the C-terminal section; belongs to the transpeptidase family. In terms of processing, the product expressed from the translation of the ponA gene appears as two bands on a gel (1A and 1B), but the specific amino acid sequence of each protein is unknown. Post-translationally, the N-terminus is blocked.

It localises to the cell membrane. It is found in the forespore inner membrane. The catalysed reaction is [GlcNAc-(1-&gt;4)-Mur2Ac(oyl-L-Ala-gamma-D-Glu-L-Lys-D-Ala-D-Ala)](n)-di-trans,octa-cis-undecaprenyl diphosphate + beta-D-GlcNAc-(1-&gt;4)-Mur2Ac(oyl-L-Ala-gamma-D-Glu-L-Lys-D-Ala-D-Ala)-di-trans,octa-cis-undecaprenyl diphosphate = [GlcNAc-(1-&gt;4)-Mur2Ac(oyl-L-Ala-gamma-D-Glu-L-Lys-D-Ala-D-Ala)](n+1)-di-trans,octa-cis-undecaprenyl diphosphate + di-trans,octa-cis-undecaprenyl diphosphate + H(+). It catalyses the reaction Preferential cleavage: (Ac)2-L-Lys-D-Ala-|-D-Ala. Also transpeptidation of peptidyl-alanyl moieties that are N-acyl substituents of D-alanine.. It participates in cell wall biogenesis; peptidoglycan biosynthesis. Functionally, cell wall formation. Synthesis of cross-linked peptidoglycan from the lipid intermediates. The enzyme has a penicillin-insensitive transglycosylase N-terminal domain (formation of linear glycan strands) and a penicillin-sensitive transpeptidase C-terminal domain (cross-linking of the peptide subunits). Required for vegetative growth. Has a partially redundant function with PBP-2A (pbpA) during spore outgrowth. The sequence is that of Penicillin-binding protein 1A/1B (ponA) from Bacillus subtilis (strain 168).